Reading from the N-terminus, the 259-residue chain is Phosphate import ATP-binding protein PstB (259 aa).

An ABC transporter domain is found at 6-254 (SKNESVVFDV…PKDKRTEDYI (249 aa)). 45-52 (GPSGCGKS) contributes to the ATP binding site.

It belongs to the ABC transporter superfamily. Phosphate importer (TC 3.A.1.7) family. In terms of assembly, the complex is composed of two ATP-binding proteins (PstB), two transmembrane proteins (PstC and PstA) and a solute-binding protein (PstS).

The protein resides in the cell membrane. The catalysed reaction is phosphate(out) + ATP + H2O = ADP + 2 phosphate(in) + H(+). Functionally, part of the ABC transporter complex PstSACB involved in phosphate import. Responsible for energy coupling to the transport system. This is Phosphate import ATP-binding protein PstB from Desulfitobacterium hafniense (strain Y51).